Here is a 646-residue protein sequence, read N- to C-terminus: Mitochondrial distribution and morphology protein 10 (646 aa).

2 disordered regions span residues lysine 206 to asparagine 230 and glutamate 315 to leucine 347. Residues serine 207–asparagine 230 are compositionally biased toward low complexity. Over residues glutamate 315–glycine 333 the composition is skewed to polar residues.

Belongs to the MDM10 family. In terms of assembly, component of the ER-mitochondria encounter structure (ERMES) or MDM complex, composed of MMM1, MDM10, MDM12 and MDM34. Associates with the mitochondrial outer membrane sorting assembly machinery SAM(core) complex.

It localises to the mitochondrion outer membrane. Component of the ERMES/MDM complex, which serves as a molecular tether to connect the endoplasmic reticulum and mitochondria. Components of this complex are involved in the control of mitochondrial shape and protein biogenesis and may function in phospholipid exchange. MDM10 is involved in the late assembly steps of the general translocase of the mitochondrial outer membrane (TOM complex). Functions in the TOM40-specific route of the assembly of outer membrane beta-barrel proteins, including the association of TOM40 with the receptor TOM22 and small TOM proteins. Can associate with the SAM(core) complex as well as the MDM12-MMM1 complex, both involved in late steps of the major beta-barrel assembly pathway, that is responsible for biogenesis of all outer membrane beta-barrel proteins. May act as a switch that shuttles between both complexes and channels precursor proteins into the TOM40-specific pathway. Plays a role in mitochondrial morphology and in the inheritance of mitochondria. In Mycosarcoma maydis (Corn smut fungus), this protein is Mitochondrial distribution and morphology protein 10.